Consider the following 226-residue polypeptide: 7-carboxy-7-deazaguanine synthase (226 aa).

Residues L10–G12 and R25 each bind substrate. In terms of domain architecture, Radical SAM core spans Y16–P221. [4Fe-4S] cluster is bound by residues C29, C33, and C36. S38 contacts Mg(2+). T69 is a substrate binding site. S-adenosyl-L-methionine is bound at residue G71.

The protein belongs to the radical SAM superfamily. 7-carboxy-7-deazaguanine synthase family. In terms of assembly, homodimer. Requires [4Fe-4S] cluster as cofactor. The cofactor is S-adenosyl-L-methionine. Mg(2+) serves as cofactor.

It carries out the reaction 6-carboxy-5,6,7,8-tetrahydropterin + H(+) = 7-carboxy-7-deazaguanine + NH4(+). It participates in purine metabolism; 7-cyano-7-deazaguanine biosynthesis. Catalyzes the complex heterocyclic radical-mediated conversion of 6-carboxy-5,6,7,8-tetrahydropterin (CPH4) to 7-carboxy-7-deazaguanine (CDG), a step common to the biosynthetic pathways of all 7-deazapurine-containing compounds. The sequence is that of 7-carboxy-7-deazaguanine synthase from Koribacter versatilis (strain Ellin345).